The primary structure comprises 372 residues: Putative glutamate--cysteine ligase 2 (372 aa).

It belongs to the glutamate--cysteine ligase type 2 family. YbdK subfamily. In terms of assembly, homodimer.

It carries out the reaction L-cysteine + L-glutamate + ATP = gamma-L-glutamyl-L-cysteine + ADP + phosphate + H(+). ATP-dependent carboxylate-amine ligase which exhibits weak glutamate--cysteine ligase activity. The polypeptide is Putative glutamate--cysteine ligase 2 (ybdK) (Salmonella arizonae (strain ATCC BAA-731 / CDC346-86 / RSK2980)).